The following is a 337-amino-acid chain: UPF0284 protein AF_0276 (337 aa).

This sequence belongs to the UPF0284 family.

This Archaeoglobus fulgidus (strain ATCC 49558 / DSM 4304 / JCM 9628 / NBRC 100126 / VC-16) protein is UPF0284 protein AF_0276.